The sequence spans 323 residues: Methionyl-tRNA formyltransferase (323 aa).

115-118 (SLLP) contributes to the (6S)-5,6,7,8-tetrahydrofolate binding site.

The protein belongs to the Fmt family.

It catalyses the reaction L-methionyl-tRNA(fMet) + (6R)-10-formyltetrahydrofolate = N-formyl-L-methionyl-tRNA(fMet) + (6S)-5,6,7,8-tetrahydrofolate + H(+). Functionally, attaches a formyl group to the free amino group of methionyl-tRNA(fMet). The formyl group appears to play a dual role in the initiator identity of N-formylmethionyl-tRNA by promoting its recognition by IF2 and preventing the misappropriation of this tRNA by the elongation apparatus. In Lactococcus lactis subsp. cremoris (strain SK11), this protein is Methionyl-tRNA formyltransferase.